A 245-amino-acid chain; its full sequence is Actin-like protein 10 (245 aa).

This sequence belongs to the actin family.

This chain is Actin-like protein 10 (ACTL10), found in Homo sapiens (Human).